A 167-amino-acid chain; its full sequence is MGGKHDISRRQFLNYTLTGVGGFMAASMLMPMVRFALDPVLKSTGKQDMVQVVSVDELTKEPQRFDFKINQVDAWYESEESRSAWVFKNGDEIVALSPICKHLGCTVNWNSDPKNPNKFFCPCHYGLYEKDGTNVPGTPPLAPLDHYEQEVKDGFLYLGKAKPKGEG.

Residues 59–158 (TKEPQRFDFK…QEVKDGFLYL (100 aa)) form the Rieske domain. [2Fe-2S] cluster contacts are provided by Cys-100, His-102, Cys-121, and His-124. Cys-105 and Cys-123 are joined by a disulfide.

This sequence belongs to the Rieske iron-sulfur protein family. As to quaternary structure, the main subunits of the menaquinol:cytochrome c complex are a Rieske-type iron-sulfur protein (QcrA), a cytochrome b (QcrB) and a cytochrome c (QcrC). [2Fe-2S] cluster serves as cofactor.

In terms of biological role, component of the menaquinol:cytochrome c reductase complex. The Rieske protein is a high potential 2Fe-2S protein. This chain is Menaquinol:cytochrome c reductase iron-sulfur subunit (qcrA), found in Bacillus subtilis (strain 168).